The following is a 483-amino-acid chain: FAD-linked oxidoreductase pgmH (483 aa).

In terms of domain architecture, FAD-binding PCMH-type spans 54 to 215 (SIRLATLVVY…TEFKYRVHKQ (162 aa)).

This sequence belongs to the oxygen-dependent FAD-linked oxidoreductase family. FAD serves as cofactor.

Its pathway is pigment biosynthesis. The protein operates within secondary metabolite biosynthesis. Its function is as follows. FAD-linked oxidoreductase; part of the gene cluster that mediates the biosynthesis of pleosporalin A, ascomycone A, as well as a third cryptic naphthoquinone derived pigment, all responsible for the coloration of conidia. Essential for the production of pleosporalin A, but not the 2 other final products. The pathway begins with the biosynthesis of the cyclized heptaketide 3-acetonyl-1,6,8-trihydroxy-2-naphthaldehyde by the NR-PKS pgmA. The C-6 hydroxyl group is further methylated by the O-methyltransferase pgmB to yield fusarubinaldehyde which is in turn oxidized by the cytochrome P450 monooxygenase pgmC at C-9. The C-1 hydroxyl group is then methylated spontaneously. Although pgmE, pgmD and pgmH are essential for the production of pleosporalin A, it is not the case for the 2 other final products and it remains difficult to assign a specific function to each enzyme. PgmF and pgmG seem not to be involved in pigment biosynthesis although they were regulated by the cluster-specific transcription factor pgmR. In Aspergillus terreus (strain NIH 2624 / FGSC A1156), this protein is FAD-linked oxidoreductase pgmH.